Consider the following 554-residue polypeptide: MDSDQTPLINPSLFEECAQNHFAATDPRSRRPFHIEPSYITSINDDDPQRITSVASAMNKRIHYYSKLSNPSDKGLIAPDHVLPAPEEIYVYSPLGTALKIDGSDGTGKNSSIVTIFMIWNTMMGTSILSIPWGIKQAGFTTGVCILFLMGILTLYCCYRVVKSRGTIPLTDTSNWEFPDVCQYYFGSFGRWSSLLFSLVSLIGAMIVYWVLMSNFLFNTGKFIYNYVNDVNVTDDVLSNNGSDKVICPNPDSTRPLNKSMDTYFGNGTNYEQFETWWSKTNTVPFYLVVLLLPLLSFRSPSFFAKFNILGTVSIIYLVSLVTLKAAHLGFHLRFSWNQVQEFFVPEFRLSFPQLTGILTLAFFIHNCIITLLKNNRNQKNNVRDLSIAYLLVGLTYIYVGVAVFASFPSPPLSKQCIQQNFLDNFPSSDILAFVARIFLLFQMMTVYPLLGYLVRVQLLGHIFGDIYPSVFHVLALNIAVVGVGVIMARFYPNIGGIIRFSGAACGLAFVFVYPSLIHMISLHRRGQLKVHSILIHVSIIVLGIANLIAQFFM.

At 1–112 (MDSDQTPLIN…GSDGTGKNSS (112 aa)) the chain is on the cytoplasmic side. A helical membrane pass occupies residues 113 to 133 (IVTIFMIWNTMMGTSILSIPW). The important for arginine binding and amino acid transport stretch occupies residues 122-127 (TMMGTS). Ser-127 lines the arginine pocket. Residues 134–139 (GIKQAG) lie on the Lumenal side of the membrane. A helical membrane pass occupies residues 140 to 160 (FTTGVCILFLMGILTLYCCYR). The Cytoplasmic segment spans residues 161–191 (VVKSRGTIPLTDTSNWEFPDVCQYYFGSFGR). The helical transmembrane segment at 192–218 (WSSLLFSLVSLIGAMIVYWVLMSNFLF) threads the bilayer. Topologically, residues 219–276 (NTGKFIYNYVNDVNVTDDVLSNNGSDKVICPNPDSTRPLNKSMDTYFGNGTNYEQFET) are lumenal. Residues Asn-232, Asn-241, Asn-258, and Asn-267 are each glycosylated (N-linked (GlcNAc...) asparagine). Residues Cys-248 and Cys-417 are joined by a disulfide bond. A helical transmembrane segment spans residues 277–293 (WWSKTNTVPFYLVVLLL). The Cytoplasmic segment spans residues 294–302 (PLLSFRSPS). A helical membrane pass occupies residues 303 to 327 (FFAKFNILGTVSIIYLVSLVTLKAA). Topologically, residues 328–349 (HLGFHLRFSWNQVQEFFVPEFR) are lumenal. The chain crosses the membrane as a helical span at residues 350-370 (LSFPQLTGILTLAFFIHNCII). Residues 371 to 387 (TLLKNNRNQKNNVRDLS) lie on the Cytoplasmic side of the membrane. The chain crosses the membrane as a helical span at residues 388 to 408 (IAYLLVGLTYIYVGVAVFASF). At 409–430 (PSPPLSKQCIQQNFLDNFPSSD) the chain is on the lumenal side. A helical transmembrane segment spans residues 431 to 451 (ILAFVARIFLLFQMMTVYPLL). Positions 437 to 447 (RIFLLFQMMTV) match the CARC motif motif. The short motif at 450 to 456 (LLGYLVR) is the CRAC motif element. Over 452–472 (GYLVRVQLLGHIFGDIYPSVF) the chain is Cytoplasmic. The chain crosses the membrane as a helical span at residues 473-493 (HVLALNIAVVGVGVIMARFYP). Over 494-500 (NIGGIIR) the chain is Lumenal. A helical membrane pass occupies residues 501-521 (FSGAACGLAFVFVYPSLIHMI). Topologically, residues 522 to 533 (SLHRRGQLKVHS) are cytoplasmic. A helical transmembrane segment spans residues 534 to 554 (ILIHVSIIVLGIANLIAQFFM).

Belongs to the amino acid/polyamine transporter 2 family. SLC38A9 subfamily. As to quaternary structure, associated component of the Ragulator complex. Associated component of the Rag GTPases heterodimers. In terms of processing, glycosylated.

Its subcellular location is the lysosome membrane. The protein resides in the late endosome membrane. It catalyses the reaction L-leucine(in) = L-leucine(out). The enzyme catalyses L-tyrosine(in) = L-tyrosine(out). The catalysed reaction is L-glutamine(out) = L-glutamine(in). It carries out the reaction L-asparagine(out) = L-asparagine(in). Functionally, lysosomal amino acid transporter involved in the activation of mTORC1 in response to amino acid levels. Probably acts as an amino acid sensor of the Rag GTPases and Ragulator complexes, 2 complexes involved in amino acid sensing and activation of mTORC1, a signaling complex promoting cell growth in response to growth factors, energy levels, and amino acids. Following activation by amino acids, the Ragulator and Rag GTPases function as a scaffold recruiting mTORC1 to lysosomes where it is in turn activated. SLC38A9 mediates transport of amino acids with low capacity and specificity with a slight preference for polar amino acids. Acts as an arginine sensor. Following activation by arginine binding, mediates transport of L-glutamine, leucine and tyrosine with high efficiency, and is required for the efficient utilization of these amino acids after lysosomal protein degradation. However, the transport mechanism is not well defined and the role of sodium is not clear. Guanine exchange factor (GEF) that, upon arginine binding, stimulates GDP release from RRAGA and therefore activates the Rag GTPase heterodimer and the mTORC1 pathway in response to nutrient sufficiency. The protein is Neutral amino acid transporter 9 of Xenopus tropicalis (Western clawed frog).